Here is a 433-residue protein sequence, read N- to C-terminus: Adenylosuccinate synthetase (433 aa).

Residues 11 to 17 (GDEGKGK) and 39 to 41 (GHT) each bind GTP. The active-site Proton acceptor is aspartate 12. Aspartate 12 and glycine 39 together coordinate Mg(2+). IMP is bound by residues 12-15 (DEGK), 37-40 (NAGH), threonine 134, arginine 148, asparagine 230, threonine 245, and arginine 309. The active-site Proton donor is histidine 40. A substrate-binding site is contributed by 305 to 311 (VTTGRKR). GTP is bound by residues arginine 311, 337–339 (KLD), and 419–421 (GTG).

Belongs to the adenylosuccinate synthetase family. Homodimer. Mg(2+) is required as a cofactor.

Its subcellular location is the cytoplasm. It catalyses the reaction IMP + L-aspartate + GTP = N(6)-(1,2-dicarboxyethyl)-AMP + GDP + phosphate + 2 H(+). The protein operates within purine metabolism; AMP biosynthesis via de novo pathway; AMP from IMP: step 1/2. Functionally, plays an important role in the de novo pathway and in the salvage pathway of purine nucleotide biosynthesis. Catalyzes the first committed step in the biosynthesis of AMP from IMP. This is Adenylosuccinate synthetase from Saccharomyces cerevisiae (strain Lalvin EC1118 / Prise de mousse) (Baker's yeast).